A 503-amino-acid chain; its full sequence is Maturase K (503 aa).

This sequence belongs to the intron maturase 2 family. MatK subfamily.

It is found in the plastid. It localises to the chloroplast. Functionally, usually encoded in the trnK tRNA gene intron. Probably assists in splicing its own and other chloroplast group II introns. The protein is Maturase K of Purshia tridentata (Antelope bitterbrush).